The following is a 130-amino-acid chain: Small ribosomal subunit protein bS6 (130 aa).

A disordered region spans residues 96 to 130; it reads VTEASPMAKARDERDSRRSPSDDRIEEESAEENAE. Residues 104–118 are compositionally biased toward basic and acidic residues; that stretch reads KARDERDSRRSPSDD. The segment covering 119–130 has biased composition (acidic residues); sequence RIEEESAEENAE.

Belongs to the bacterial ribosomal protein bS6 family.

In terms of biological role, binds together with bS18 to 16S ribosomal RNA. This chain is Small ribosomal subunit protein bS6, found in Shewanella denitrificans (strain OS217 / ATCC BAA-1090 / DSM 15013).